A 905-amino-acid chain; its full sequence is DNA mismatch repair protein MutS (905 aa).

Positions Glu389–Pro410 are disordered. Gly638–Ser645 is a binding site for ATP. The interval Arg826 to Pro847 is disordered. A compositionally biased stretch (polar residues) spans Gly831–Thr840.

This sequence belongs to the DNA mismatch repair MutS family.

This protein is involved in the repair of mismatches in DNA. It is possible that it carries out the mismatch recognition step. This protein has a weak ATPase activity. The sequence is that of DNA mismatch repair protein MutS from Nitratidesulfovibrio vulgaris (strain ATCC 29579 / DSM 644 / CCUG 34227 / NCIMB 8303 / VKM B-1760 / Hildenborough) (Desulfovibrio vulgaris).